We begin with the raw amino-acid sequence, 204 residues long: UPF0637 protein lmo1065 (204 aa).

It belongs to the UPF0637 family.

This Listeria monocytogenes serovar 1/2a (strain ATCC BAA-679 / EGD-e) protein is UPF0637 protein lmo1065.